We begin with the raw amino-acid sequence, 108 residues long: Putative membrane protein insertion efficiency factor (108 aa).

Belongs to the UPF0161 family.

Its subcellular location is the cell inner membrane. Functionally, could be involved in insertion of integral membrane proteins into the membrane. This chain is Putative membrane protein insertion efficiency factor, found in Chelativorans sp. (strain BNC1).